Consider the following 180-residue polypeptide: Inner membrane-spanning protein YciB (180 aa).

A run of 5 helical transmembrane segments spans residues 22–42 (IYVASGALVAATAVALVLTWL), 50–70 (MTLITFIMVAIFGTLTLVFHN), 76–96 (WKVTVIYTLFALALLISQVVL), 121–141 (AAWALFFLGCGLANIYVAFWL), and 149–169 (FKVFGLTALTLVFTLLSGIYI).

The protein belongs to the YciB family.

Its subcellular location is the cell inner membrane. Plays a role in cell envelope biogenesis, maintenance of cell envelope integrity and membrane homeostasis. This is Inner membrane-spanning protein YciB from Edwardsiella ictaluri (strain 93-146).